A 206-amino-acid chain; its full sequence is Small ribosomal subunit protein uS4 (206 aa).

In terms of domain architecture, S4 RNA-binding spans 94–157; the sequence is RRLDNVVYRL…RSRTYFKNLV (64 aa).

This sequence belongs to the universal ribosomal protein uS4 family. Part of the 30S ribosomal subunit. Contacts protein S5. The interaction surface between S4 and S5 is involved in control of translational fidelity.

One of the primary rRNA binding proteins, it binds directly to 16S rRNA where it nucleates assembly of the body of the 30S subunit. Its function is as follows. With S5 and S12 plays an important role in translational accuracy. This Chloroflexus aurantiacus (strain ATCC 29364 / DSM 637 / Y-400-fl) protein is Small ribosomal subunit protein uS4.